The sequence spans 394 residues: Putative 8-amino-7-oxononanoate synthase (394 aa).

Arg30 is a binding site for substrate. 117 to 118 (GY) is a binding site for pyridoxal 5'-phosphate. Residue His142 participates in substrate binding. Residues Ser190, 215 to 218 (DEAH), and 246 to 249 (TLSK) each bind pyridoxal 5'-phosphate. Lys249 carries the N6-(pyridoxal phosphate)lysine modification. Residue Thr364 coordinates substrate.

It belongs to the class-II pyridoxal-phosphate-dependent aminotransferase family. BioF subfamily. As to quaternary structure, homodimer. Requires pyridoxal 5'-phosphate as cofactor.

The catalysed reaction is 6-carboxyhexanoyl-[ACP] + L-alanine + H(+) = (8S)-8-amino-7-oxononanoate + holo-[ACP] + CO2. It functions in the pathway cofactor biosynthesis; biotin biosynthesis. Catalyzes the decarboxylative condensation of pimeloyl-[acyl-carrier protein] and L-alanine to produce 8-amino-7-oxononanoate (AON), [acyl-carrier protein], and carbon dioxide. This Nostoc punctiforme (strain ATCC 29133 / PCC 73102) protein is Putative 8-amino-7-oxononanoate synthase (bioF).